An 887-amino-acid chain; its full sequence is Cytoplasmic aconitate hydratase (887 aa).

Residues Gln84 and 204 to 206 each bind substrate; that span reads DSH. Positions 436, 502, and 505 each coordinate [4Fe-4S] cluster. Substrate-binding positions include Arg535, Arg540, Arg697, and 777–778; that span reads SR.

It belongs to the aconitase/IPM isomerase family. In terms of assembly, interacts with gex-3. It depends on [4Fe-4S] cluster as a cofactor.

It is found in the cytoplasm. The protein resides in the cytosol. It catalyses the reaction citrate = D-threo-isocitrate. Functionally, catalyzes the isomerization of citrate to isocitrate via cis-aconitate. Has probably no RNA-binding activity. The chain is Cytoplasmic aconitate hydratase (aco-1) from Caenorhabditis elegans.